The primary structure comprises 180 residues: GTP cyclohydrolase 1 (180 aa).

Positions 71, 74, and 142 each coordinate Zn(2+).

The protein belongs to the GTP cyclohydrolase I family. Toroid-shaped homodecamer, composed of two pentamers of five dimers.

The enzyme catalyses GTP + H2O = 7,8-dihydroneopterin 3'-triphosphate + formate + H(+). The protein operates within cofactor biosynthesis; 7,8-dihydroneopterin triphosphate biosynthesis; 7,8-dihydroneopterin triphosphate from GTP: step 1/1. The protein is GTP cyclohydrolase 1 (folE) of Helicobacter pylori (strain ATCC 700392 / 26695) (Campylobacter pylori).